The primary structure comprises 684 residues: Pescadillo homolog (684 aa).

Residues 284 to 352 (DAAAAEASSN…DSDEEADDEA (69 aa)) are disordered. The segment covering 285–294 (AAAAEASSNA) has biased composition (low complexity). Residues 296–310 (TRKDGKKLSTRDVKR) show a composition bias toward basic and acidic residues. Over residues 342-352 (QDSDEEADDEA) the composition is skewed to acidic residues. Positions 387–486 (PLPMLFSRYV…QILPTDPYRP (100 aa)) constitute a BRCT domain. Disordered regions lie at residues 508–580 (GYVP…ALLA) and 612–684 (AASL…NKKP). Positions 528–543 (ADEDEDEDEDEDEDED) are enriched in acidic residues. The segment covering 544 to 570 (KAGSGRGDDKNVAAREQDAVEKHDKTP) has biased composition (basic and acidic residues). Residues 612–624 (AASLKSHKKKKRT) show a composition bias toward basic residues. A compositionally biased stretch (basic and acidic residues) spans 663–675 (KKKEEKMRLEAKK).

It belongs to the pescadillo family. Component of the NOP7 complex, composed of ERB1, NOP7 and YTM1. The complex is held together by ERB1, which interacts with NOP7 via its N-terminal domain and with YTM1 via a high-affinity interaction between the seven-bladed beta-propeller domains of the 2 proteins. The NOP7 complex associates with the 66S pre-ribosome.

Its subcellular location is the nucleus. The protein localises to the nucleolus. It is found in the nucleoplasm. Component of the NOP7 complex, which is required for maturation of the 25S and 5.8S ribosomal RNAs and formation of the 60S ribosome. In Malassezia globosa (strain ATCC MYA-4612 / CBS 7966) (Dandruff-associated fungus), this protein is Pescadillo homolog.